Here is a 687-residue protein sequence, read N- to C-terminus: Geranylgeranyl transferase type-2 subunit alpha 2 (687 aa).

5 PFTA repeats span residues Tyr-38–Asp-72, Ile-83–His-117, Tyr-132–Thr-167, Ser-168–Ala-203, and Thr-214–Lys-248. LRR repeat units lie at residues Met-523–Leu-545, Leu-546–Met-567, Gln-568–His-591, Leu-592–Tyr-616, and Leu-646–Ser-668.

The protein belongs to the protein prenyltransferase subunit alpha family. Heterotrimer composed of the alpha subunit RGTA, the beta subunit RGTB and REP; within this trimer, RGTA and RGTB form the catalytic component, while REP mediates peptide substrate binding.

It carries out the reaction geranylgeranyl diphosphate + L-cysteinyl-[protein] = S-geranylgeranyl-L-cysteinyl-[protein] + diphosphate. With respect to regulation, the enzymatic reaction requires the aid of the Rab escort protein REP. Functionally, catalyzes the transfer of a geranylgeranyl moiety from geranylgeranyl diphosphate to both cysteines of Rab proteins with the C-terminal sequence -CCXX, CXXX, -XCCX and -XCXC, such as RABA1A, RABA2A, RABF2A and RABG2. Does not seem to be a functional Rab-GGT alpha subunit in vitro. The sequence is that of Geranylgeranyl transferase type-2 subunit alpha 2 from Arabidopsis thaliana (Mouse-ear cress).